Consider the following 214-residue polypeptide: MGAAHSASEEVRELEGKTGFSSDQIEQLHRRFKQLSGDQPTIRKENFNNVPDLELNPIRSKIVRAFFDNRNLRKGPSGLADEINFEDFLTIMSYFRPIDTTMDEEQVELSRKEKLRFLFHMYDSDSDGRITLEEYRNVVEELLSGNPHIEKESARSIADGAMMEAASVCMGQMEPDQVYEGITFEDFLKIWQGIDIETKMHVRFLNMETMALCH.

The tract at residues 1–20 is disordered; it reads MGAAHSASEEVRELEGKTGF. Gly-2 carries N-myristoyl glycine lipidation. Basic and acidic residues predominate over residues 7 to 16; the sequence is ASEEVRELEG. The region spanning 110 to 145 is the EF-hand domain; sequence SRKEKLRFLFHMYDSDSDGRITLEEYRNVVEELLSG. Residues Asp-123, Asp-125, Asp-127, Arg-129, and Glu-134 each coordinate Ca(2+).

This sequence belongs to the calcineurin regulatory subunit family. CHP subfamily. Monomer. Homodimer; disulfide-linked. Interacts with SLC9A1/NHE1; the interaction enables an optimal Na(+)/H(+) exchange activity. As to expression, expressed in mature megakaryocytes and polymorphonuclear granulocytes (at protein level). Abundantly expressed in heart. Also expressed at a lower level in adult testis and salivary gland, and in the placenta.

The protein localises to the nucleus. It localises to the cytoplasm. The protein resides in the membrane. It is found in the cell membrane. Its subcellular location is the cell projection. The protein localises to the lamellipodium. It localises to the ruffle membrane. In terms of biological role, functions as an integral cofactor in cell pH regulation by controlling plasma membrane-type Na(+)/H(+) exchange activity. Promotes the maturation, transport, cell surface stability and exchange activity of SLC9A1/NHE1 at the plasma membrane. Promotes the induction of hematopoietic stem cell differentiation toward megakaryocytic lineage. Essential for the coupling of ERK cascade activation with the expression of ETS family genes in megakaryocytic differentiation. Also involved in granulocytic differentiation in a ERK-dependent manner. Inhibits the phosphatase activity of calcineurin. This chain is Calcineurin B homologous protein 3 (TESC), found in Homo sapiens (Human).